The following is a 632-amino-acid chain: MFSSSLLSKDNKSAVDFHEIPLKQTALDVLHAVFGYQSFRKGQEEVIDATLMGKDSLVIMATGNGKSLCYQIPALCFEGLTLVISPLISLMKDQVDQLLANGIEADYLNSSQTFTEQQQVQNKLMSGTLKLLYVSPEKVMTTSFFHLISHCKVSFVAIDEAHCISQWGHDFRPEYTQLGGLKSCFPHAPIMALTATADHATRQDILRHLNLQSPHVYIGSFDRPNIRYTLVEKFKPMEQLCRFVLGQKGKSGIIYCNSRSKVERIAESLRNKGVSAQAYHAGLETSQREQVQRAFQRDNVQVVVATIAFGMGINKSNVRFVVHFDLPRSIESYYQETGRAGRDDLPAEAVLFYEPADYAWLHKILLEKPESPQRQIEALKLQAIGEFAESQTCRRLVLLNYFGEHQQKPCQNCDICLDPPKQYDGLIDAQKVMSTIYRIGQRFGVHYVIAVLRGLSNQKIKDNQHEQLSVYGIGKDKSKEHWQSVIRQLIHLGFIKQVFDHFNATLQLTENAKPILRGEQPLSLAMPRISSLTSVVAPQRYAIAQYDKDLFARLRFLRKQIADKENIPAYIVFNDATLQEMAQYQPTTKAEMLAINGVGATKFERFAQPFMQIIQQHKKVLTQHEPPLSLES.

One can recognise a Helicase ATP-binding domain in the interval 47–215; it reads IDATLMGKDS…LRHLNLQSPH (169 aa). 60-67 contacts ATP; that stretch reads MATGNGKS. The DEAH box signature appears at 159–162; sequence DEAH. Residues 236-385 enclose the Helicase C-terminal domain; sequence PMEQLCRFVL…IEALKLQAIG (150 aa). 4 residues coordinate Zn(2+): cysteine 393, cysteine 410, cysteine 413, and cysteine 416. The region spanning 544 to 624 is the HRDC domain; that stretch reads AQYDKDLFAR…QQHKKVLTQH (81 aa).

Belongs to the helicase family. RecQ subfamily. The cofactor is Mg(2+). It depends on Zn(2+) as a cofactor.

It carries out the reaction Couples ATP hydrolysis with the unwinding of duplex DNA by translocating in the 3'-5' direction.. The catalysed reaction is ATP + H2O = ADP + phosphate + H(+). In terms of biological role, an ATP-dependent DNA helicase which unwinds DNA in a 3'-5' direction. Plays a role in recombination. The polypeptide is ATP-dependent DNA helicase RecQ (Pasteurella multocida (strain Pm70)).